The sequence spans 230 residues: LexA repressor (230 aa).

A DNA-binding region (H-T-H motif) is located at residues 28–48 (IREIGEALDIRSTNGVNDHLK). Catalysis depends on for autocatalytic cleavage activity residues S148 and K185.

This sequence belongs to the peptidase S24 family. Homodimer.

It catalyses the reaction Hydrolysis of Ala-|-Gly bond in repressor LexA.. Its function is as follows. Represses a number of genes involved in the response to DNA damage (SOS response), including recA and lexA. In the presence of single-stranded DNA, RecA interacts with LexA causing an autocatalytic cleavage which disrupts the DNA-binding part of LexA, leading to derepression of the SOS regulon and eventually DNA repair. The sequence is that of LexA repressor from Anaeromyxobacter sp. (strain K).